Here is a 238-residue protein sequence, read N- to C-terminus: Ubiquitin-conjugating enzyme E2 R2 (238 aa).

Residues 8-174 enclose the UBC core domain; sequence SSQKALMLEL…IRKQVSATKA (167 aa). Cys-93 (glycyl thioester intermediate) is an active-site residue. Residues 98-113 are important for ubiquitin transfer; the sequence is HPPVDDPQSGELPSER. The segment at 194–238 is disordered; the sequence is TKVPSNDNSSDLLYDDLYDDDIDDEDEEEEDADCYDDDDSGNEES. The segment covering 206 to 238 has biased composition (acidic residues); the sequence is LYDDLYDDDIDDEDEEEEDADCYDDDDSGNEES. Residue Ser-233 is modified to Phosphoserine; by CK2.

The protein belongs to the ubiquitin-conjugating enzyme family. Interacts with multiple Cul1-RING E3 ubiquitin-protein ligase complexes, also known as SCF (SKP1-CUL1-F-box protein) complexes, including SCF(FBXW7) and SCF(BTRC). Interacts with multiple Cul2-RING (CRL2) E3 ubiquitin-protein ligase complexes, also known as ECS (Elongin BC-CUL2/5-SOCS-box protein) complexes, including CRL2(FEM1C) and ECS(VHL). When phosphorylated, interacts with beta-TrCP (BTRC).

It catalyses the reaction S-ubiquitinyl-[E1 ubiquitin-activating enzyme]-L-cysteine + [E2 ubiquitin-conjugating enzyme]-L-cysteine = [E1 ubiquitin-activating enzyme]-L-cysteine + S-ubiquitinyl-[E2 ubiquitin-conjugating enzyme]-L-cysteine.. Its pathway is protein modification; protein ubiquitination. Neddylation of CUL2 in the CRL2(FEM1C) E3 ligase complex increases substrate affinity of UBE2R2 and the ubiquitin-transfer rate in the E2-E3 complex. Its function is as follows. E2 ubiquitin-conjugating enzyme that accepts ubiquitin from an E1 ubiquitin-activating protein, and catalyzes its covalent attachment to other proteins by an E3 ubiquitin-protein ligase complex. In vitro catalyzes monoubiquitination and 'Lys-48'-linked polyubiquitination. Works in collaboration with various Cul1-RING and Cul2-RING E3 ligase complexes. May be involved in degradation of katenin. This Homo sapiens (Human) protein is Ubiquitin-conjugating enzyme E2 R2 (UBE2R2).